We begin with the raw amino-acid sequence, 415 residues long: Probable tRNA pseudouridine synthase D (415 aa).

The Nucleophile role is filled by aspartate 83. Positions 158 to 378 constitute a TRUD domain; it reads GFPNYFGYQR…PGRRRELLIR (221 aa).

This sequence belongs to the pseudouridine synthase TruD family.

It catalyses the reaction uridine(13) in tRNA = pseudouridine(13) in tRNA. Could be responsible for synthesis of pseudouridine from uracil-13 in transfer RNAs. This is Probable tRNA pseudouridine synthase D from Thermococcus gammatolerans (strain DSM 15229 / JCM 11827 / EJ3).